A 434-amino-acid chain; its full sequence is Histidinol dehydrogenase (434 aa).

NAD(+)-binding residues include tyrosine 130, glutamine 188, and asparagine 211. Substrate is bound by residues serine 237, glutamine 259, and histidine 262. The Zn(2+) site is built by glutamine 259 and histidine 262. Active-site proton acceptor residues include glutamate 326 and histidine 327. Residues histidine 327, aspartate 360, glutamate 414, and histidine 419 each coordinate substrate. Position 360 (aspartate 360) interacts with Zn(2+). Histidine 419 contributes to the Zn(2+) binding site.

It belongs to the histidinol dehydrogenase family. In terms of assembly, homodimer. Zn(2+) serves as cofactor.

It catalyses the reaction L-histidinol + 2 NAD(+) + H2O = L-histidine + 2 NADH + 3 H(+). The protein operates within amino-acid biosynthesis; L-histidine biosynthesis; L-histidine from 5-phospho-alpha-D-ribose 1-diphosphate: step 9/9. Its function is as follows. Catalyzes the sequential NAD-dependent oxidations of L-histidinol to L-histidinaldehyde and then to L-histidine. The polypeptide is Histidinol dehydrogenase (Shigella boydii serotype 4 (strain Sb227)).